A 114-amino-acid chain; its full sequence is Transcription initiation factor IIB (114 aa).

Tandem repeats lie at residues 1–17 (VEQK…AQEL) and 28–109 (QYVP…EQIE).

This sequence belongs to the TFIIB family.

In terms of biological role, stabilizes TBP binding to an archaeal box-A promoter. Also responsible for recruiting RNA polymerase II to the pre-initiation complex (DNA-TBP-TFIIB). The chain is Transcription initiation factor IIB (tfb) from Haloarcula vallismortis (Halobacterium vallismortis).